A 111-amino-acid chain; its full sequence is Regulator of ribonuclease activity B (111 aa).

The protein belongs to the RraB family. Interacts with the C-terminal region of Rne.

It localises to the cytoplasm. Functionally, globally modulates RNA abundance by binding to RNase E (Rne) and regulating its endonucleolytic activity. Can modulate Rne action in a substrate-dependent manner by altering the composition of the degradosome. In Pseudoalteromonas translucida (strain TAC 125), this protein is Regulator of ribonuclease activity B.